Consider the following 286-residue polypeptide: L-cysteine S-thiosulfotransferase subunit SoxA (286 aa).

An N-terminal signal peptide occupies residues 1–27; it reads MKKTIQRGLFTGALVLMTAMTAKPANA. A disulfide bond links Cys106 and Cys137. The Cytochrome c domain occupies 180-286; that stretch reads DAYMKGKKFF…LKYNGPASRK (107 aa). Residues Cys200 and His204 each coordinate heme. Arg243 serves as a coordination point for substrate. Cys247 contacts heme. Cys247 acts as the Cysteine persulfide intermediate in catalysis.

It belongs to the SoxA family. In terms of assembly, heterodimer of SoxA and SoxX. The SoxAX complex interacts with CT1020, SoxAX-binding protein SaxB (SoxK); this interaction seems to be between SoxA and CT1020 and stimulates catalytic activity of the SoxAX complex. Heme is required as a cofactor. Cysteine persulfide at Cys-247.

Its subcellular location is the periplasm. It carries out the reaction L-cysteinyl-[SoxY protein] + thiosulfate + 2 Fe(III)-[cytochrome c] = S-sulfosulfanyl-L-cysteinyl-[SoxY protein] + 2 Fe(II)-[cytochrome c] + 2 H(+). It catalyses the reaction S-sulfanyl-L-cysteinyl-[SoxY protein] + thiosulfate + 2 Fe(III)-[cytochrome c] = S-(2-sulfodisulfanyl)-L-cysteinyl-[SoxY protein] + 2 Fe(II)-[cytochrome c] + 2 H(+). Functionally, C-type monoheme cytochrome, which is part of the SoxAX cytochrome complex involved in sulfur oxidation. The SoxAX complex catalyzes the formation of a heterodisulfide bond between the conserved cysteine residue on a sulfur carrier SoxYZ complex subunit SoxY and thiosulfate or other inorganic sulfur substrates. This leads to the liberation of two electrons, which may be transferred from the SoxAX complex to another cytochrome c and which then may be used for reductive CO(2) fixation. The protein is L-cysteine S-thiosulfotransferase subunit SoxA of Chlorobaculum tepidum (strain ATCC 49652 / DSM 12025 / NBRC 103806 / TLS) (Chlorobium tepidum).